We begin with the raw amino-acid sequence, 253 residues long: Light-harvesting complex stress-related protein 1, chloroplastic (253 aa).

The N-terminal 39 residues, 1–39, are a transit peptide targeting the chloroplast; that stretch reads MAMMMRKAAAVPASSRRSVAVNSVSGKRTVSGKAGAPVP. Chlorophyll b is bound at residue Y45. Positions 60, 81, and 84 each coordinate chlorophyll a. R86 provides a ligand contact to chlorophyll b. The chain crosses the membrane as a helical span at residues 87–107; the sequence is VAMLAALGFIVGEQLQDFPLF. Q124 contacts chlorophyll a. Residues 131-151 traverse the membrane as a helical segment; that stretch reads EPLLIAIGVAESYRVAVGWAT. Chlorophyll b is bound by residues E141 and R144. Chlorophyll a contacts are provided by K190, E191, N194, R196, and Q208. Residues 197–217 form a helical membrane-spanning segment; the sequence is LAMIAIAAFVAQELVEQTEIF.

This sequence belongs to the light-harvesting chlorophyll a/b-binding (LHC) protein family.

The protein resides in the plastid. It is found in the chloroplast thylakoid membrane. In terms of biological role, required for non-photochemical quenching (NPQ), a mechanism that converts and dissipates the harmful excess absorbed light energy into heat and protect the photosynthetic apparatus from photo-oxidative damage. Is able to sense luminal acidification of the thylakoid membranes, which occurs along with elevated electron flow caused by excess light, and to induce a large, fast, and reversible pH-dependent quenching in LHCII-containing membranes. Mediates excitation energy transfer from light-harvesting complex II (LHCII) to photosystem I (PSI), rather than photosystem II (PSII), at low pH, which mimics the acidified lumen of the thylakoid membranes in high light-exposed chloroplasts. Activates PSI-dependent fluorescence quenching in addition to dissipating excitation energy in LHCII to avoid photooxidative stress under excess light. This is Light-harvesting complex stress-related protein 1, chloroplastic from Chlamydomonas reinhardtii (Chlamydomonas smithii).